Consider the following 406-residue polypeptide: Glucose-1-phosphate adenylyltransferase (406 aa).

Alpha-D-glucose 1-phosphate contacts are provided by residues Tyr-100, Gly-165, 181-182, and Ser-199; that span reads EK.

It belongs to the bacterial/plant glucose-1-phosphate adenylyltransferase family. As to quaternary structure, homotetramer.

It catalyses the reaction alpha-D-glucose 1-phosphate + ATP + H(+) = ADP-alpha-D-glucose + diphosphate. The protein operates within glycan biosynthesis; glycogen biosynthesis. Functionally, involved in the biosynthesis of ADP-glucose, a building block required for the elongation reactions to produce glycogen. Catalyzes the reaction between ATP and alpha-D-glucose 1-phosphate (G1P) to produce pyrophosphate and ADP-Glc. This Streptomyces avermitilis (strain ATCC 31267 / DSM 46492 / JCM 5070 / NBRC 14893 / NCIMB 12804 / NRRL 8165 / MA-4680) protein is Glucose-1-phosphate adenylyltransferase.